A 115-amino-acid polypeptide reads, in one-letter code: Meiotically up-regulated gene 42 protein (115 aa).

In terms of biological role, has a role in meiosis. The sequence is that of Meiotically up-regulated gene 42 protein (mug42) from Schizosaccharomyces pombe (strain 972 / ATCC 24843) (Fission yeast).